Here is a 906-residue protein sequence, read N- to C-terminus: Protein translocase subunit SecA (906 aa).

ATP contacts are provided by residues glutamine 86, 104–108 (GEGKT), and aspartate 499. A disordered region spans residues 862-885 (KPVVSRIDPKDRNPDDPTSWGRVS). Positions 890, 892, 901, and 902 each coordinate Zn(2+).

It belongs to the SecA family. Monomer and homodimer. Part of the essential Sec protein translocation apparatus which comprises SecA, SecYEG and auxiliary proteins SecDF-YajC and YidC. Zn(2+) is required as a cofactor.

It localises to the cell inner membrane. Its subcellular location is the cytoplasm. It catalyses the reaction ATP + H2O + cellular proteinSide 1 = ADP + phosphate + cellular proteinSide 2.. In terms of biological role, part of the Sec protein translocase complex. Interacts with the SecYEG preprotein conducting channel. Has a central role in coupling the hydrolysis of ATP to the transfer of proteins into and across the cell membrane, serving both as a receptor for the preprotein-SecB complex and as an ATP-driven molecular motor driving the stepwise translocation of polypeptide chains across the membrane. The polypeptide is Protein translocase subunit SecA (Rickettsia massiliae (strain Mtu5)).